The primary structure comprises 441 residues: Homogentisate 1,2-dioxygenase (441 aa).

Catalysis depends on H287, which acts as the Proton acceptor. Fe cation is bound by residues H330 and E336. Homogentisate-binding residues include Y345 and H366. H366 is a Fe cation binding site.

The protein belongs to the homogentisate dioxygenase family. In terms of assembly, hexamer; dimer of trimers. Fe cation serves as cofactor.

It carries out the reaction homogentisate + O2 = 4-maleylacetoacetate + H(+). It participates in amino-acid degradation; L-phenylalanine degradation; acetoacetate and fumarate from L-phenylalanine: step 4/6. Involved in the catabolism of homogentisate (2,5-dihydroxyphenylacetate or 2,5-OH-PhAc), a central intermediate in the degradation of phenylalanine and tyrosine. Catalyzes the oxidative ring cleavage of the aromatic ring of homogentisate to yield maleylacetoacetate. This Xanthomonas oryzae pv. oryzae (strain MAFF 311018) protein is Homogentisate 1,2-dioxygenase.